The following is a 490-amino-acid chain: Doublesex- and mab-3-related transcription factor A1 (490 aa).

The segment covering 1-13 (MERLPHGRRDRSG) has biased composition (basic and acidic residues). The interval 1 to 31 (MERLPHGRRDRSGGCRPHLAPGRAAAPASAA) is disordered. Low complexity predominate over residues 20 to 31 (APGRAAAPASAA). Residues 86 to 133 (CARCRNHGVVSALKGHKRFCRWRDCACAKCTLIAERQRVMAAQVALRR) constitute a DNA-binding region (DM). Disordered regions lie at residues 152–171 (GSSGSGAQASGGSGRTESPQ) and 207–289 (DRKQ…DLES). The segment covering 207–216 (DRKQEPKQRN) has biased composition (basic and acidic residues). Composition is skewed to polar residues over residues 217 to 242 (CESCQSRQEEPVSNTHHHSLGSSKGN) and 269 to 289 (PTDQSGGEDSPRSFSSSDLES). The DMA domain occupies 314–349 (RDPLGILTRIFPGYKHSRLEGILQFCKGDVVQAIEQ).

The protein belongs to the DMRT family. Widely expressed, with highest levels in ovary, testis, epididymis, preputial gland, vomeronasal organ, liver, salivary glands and heart. Also expressed throughout the brain with highest levels in the olfactory bulbs and medulla. Detected at similar levels in gonads of both sexes.

It localises to the nucleus. This is Doublesex- and mab-3-related transcription factor A1 (Dmrta1) from Mus musculus (Mouse).